The primary structure comprises 225 residues: Perlwapin-like protein (225 aa).

The N-terminal stretch at 1–19 is a signal peptide; it reads MNHLWLFIVTVSCIYLVYG. Disulfide bonds link Cys-27–Cys-57, Cys-36–Cys-61, Cys-43–Cys-56, and Cys-49–Cys-65. Residues 27–68 enclose the WAP 1; atypical domain; the sequence is CKVKFMGTACPLGRLVCEEDGDCLGVNQVCCYDGCGTTCHNK. Asn-67 carries an N-linked (GlcNAc...) asparagine glycan. A WAP 2 domain is found at 117 to 169; it reads IIPSPELLCPVVTVRYAFCRFSTYTPCHTSNDCAVPGMKCCPDVCGKRCKFPI. 4 cysteine pairs are disulfide-bonded: Cys-125/Cys-157, Cys-135/Cys-161, Cys-143/Cys-156, and Cys-149/Cys-165. N-linked (GlcNAc...) asparagine glycosylation is present at Asn-170. The interval 176–225 is disordered; sequence QFQQTPLKPTVPLPQYQQTPLQPTVPSSQPPLQPTVPSPQSYNYKGACST. The segment covering 188–201 has biased composition (low complexity); the sequence is LPQYQQTPLQPTVP. Residues 203–212 are compositionally biased toward pro residues; the sequence is SQPPLQPTVP. A compositionally biased stretch (polar residues) spans 213–225; the sequence is SPQSYNYKGACST.

In terms of tissue distribution, component of the acid-soluble organic matrix of calcified layers of the shell (at protein level).

The protein resides in the secreted. This is Perlwapin-like protein from Lottia gigantea (Giant owl limpet).